A 591-amino-acid chain; its full sequence is Reduced folate transporter (591 aa).

Met-1 carries the N-acetylmethionine modification. Topologically, residues 1-29 (MVPSSPAVEKQVPVEPGPDPELRSWRHLV) are cytoplasmic. Ser-5 is subject to Phosphoserine. Residues 30–50 (CYLCFYGFMAQIRPGESFITP) traverse the membrane as a helical segment. Positions 48 and 49 each coordinate folate. Topologically, residues 51 to 64 (YLLGPDKNFTREQV) are extracellular. Residue Asn-58 is glycosylated (N-linked (GlcNAc...) asparagine). A helical membrane pass occupies residues 65–87 (TNEITPVLSYSYLAVLVPVFLLT). Residues 88–91 (DYLR) are Cytoplasmic-facing. A helical transmembrane segment spans residues 92 to 112 (YTPVLLLQGLSFVSVWLLLLL). Topologically, residues 113-116 (GHSV) are extracellular. A helical transmembrane segment spans residues 117 to 139 (AHMQLMELFYSVTMAARIAYSSY). The folate site is built by Glu-123 and Arg-133. 2',3'-cGAMP-binding residues include Arg-133, Ile-134, Ser-137, Tyr-149, and Arg-157. The Cytoplasmic portion of the chain corresponds to 140 to 153 (IFSLVRPARYQRVA). A helical membrane pass occupies residues 154–178 (GYSRAAVLLGVFTSSVLGQLLVTVG). Residue Val-164 participates in folate binding. The Extracellular portion of the chain corresponds to 179-183 (RVSFS). The chain crosses the membrane as a helical span at residues 184–202 (TLNYISLAFLTFSVVLALF). Over 203-266 (LKRPKRSLFF…ELGDSLRRPQ (64 aa)) the chain is Cytoplasmic. Ser-225 bears the Phosphoserine mark. Residues 267-292 (LRLWSLWWVFNSAGYYLVVYYVHILW) traverse the membrane as a helical segment. Residues Tyr-281, Tyr-282, and Tyr-286 each contribute to the folate site. Residue Tyr-282 coordinates 2',3'-cGAMP. Over 293–304 (NEVDPTTNSARV) the chain is Extracellular. The helical transmembrane segment at 305–327 (YNGAADAASTLLGAITSFAAGFV) threads the bilayer. Ser-321 lines the 2',3'-cGAMP pocket. Residues 328–333 (KIRWAR) are Cytoplasmic-facing. A helical transmembrane segment spans residues 334–354 (WSKLLIAGVTATQAGLVFLLA). Residues 355-360 (HTRHPS) are Extracellular-facing. Residues 361–384 (SIWLCYAAFVLFRGSYQFLVPIAT) form a helical membrane-spanning segment. Folate contacts are provided by Arg-373 and Gln-377. Residues Gln-377, Pro-381, Thr-384, Lys-393, Cys-396, and Phe-400 each coordinate 2',3'-cGAMP. Over 385–398 (FQIASSLSKELCAL) the chain is Cytoplasmic. A helical transmembrane segment spans residues 399-422 (VFGVNTFFATIVKTIITFIVSDVR). Residues 407 to 419 (ATIVKTIITFIVS) are required for substrate-binding. The Extracellular segment spans residues 423 to 430 (GLGLPVRK). A helical membrane pass occupies residues 431–455 (QFQLYSVYFLILSIIYFLGAMLDGL). Residues 456–591 (RHCQRGHHPR…PSDGVQNVNQ (136 aa)) lie on the Cytoplasmic side of the membrane. A phosphoserine mark is found at Ser-474, Ser-485, Ser-499, and Ser-503.

It belongs to the reduced folate carrier (RFC) transporter (TC 2.A.48) family. Placenta, liver, and to a much smaller extent, in lung.

The protein localises to the cell membrane. It is found in the apical cell membrane. It localises to the basolateral cell membrane. It catalyses the reaction 5-amino-1-(5-phospho-beta-D-ribosyl)imidazole-4-carboxamide(in) + (6S)-5-methyl-5,6,7,8-tetrahydrofolate(out) = 5-amino-1-(5-phospho-beta-D-ribosyl)imidazole-4-carboxamide(out) + (6S)-5-methyl-5,6,7,8-tetrahydrofolate(in). It carries out the reaction 2',3'-cGAMP(out) + 5-amino-1-(5-phospho-beta-D-ribosyl)imidazole-4-carboxamide(in) = 2',3'-cGAMP(in) + 5-amino-1-(5-phospho-beta-D-ribosyl)imidazole-4-carboxamide(out). The catalysed reaction is 3',3'-cGAMP(out) + 5-amino-1-(5-phospho-beta-D-ribosyl)imidazole-4-carboxamide(in) = 3',3'-cGAMP(in) + 5-amino-1-(5-phospho-beta-D-ribosyl)imidazole-4-carboxamide(out). In terms of biological role, antiporter that mediates the import of reduced folates or a subset of cyclic dinucleotides, driven by the export of organic anions. Acts as an importer of immunoreactive cyclic dinucleotides, such as cyclic GMP-AMP (2'-3'-cGAMP), an immune messenger produced in response to DNA virus in the cytosol, and its linkage isomer 3'-3'-cGAMP, thus playing a role in triggering larger immune responses. Mechanistically, acts as a secondary active transporter, which exports intracellular organic anions down their concentration gradients to facilitate the uptake of its substrates. Has high affinity for N5-methyltetrahydrofolate, the predominant circulating form of folate. Also mediates the import of antifolate drug methotrexate. 5-amino-4-imidazolecarboxamide riboside (AICAR), when phosphorylated to AICAR monophosphate, can serve as an organic anion for antiporter activity. In Homo sapiens (Human), this protein is Reduced folate transporter.